We begin with the raw amino-acid sequence, 242 residues long: Protein CDV3 homolog B (242 aa).

Basic and acidic residues predominate over residues 1 to 15 (MAEPEERSLDDFFAK). The disordered stretch occupies residues 1-242 (MAEPEERSLD…DNQYAVLGEQ (242 aa)). Position 2 is an N-acetylalanine (alanine 2). Residues 30–57 (AAGSRGPARPSDGATSSSLSSYVSAAGK) are compositionally biased toward low complexity. Residues 59-75 (VKKEKSGKSENPDQLQE) are compositionally biased toward basic and acidic residues. Over residues 105–122 (KEDDENENKEEQGADWEE) the composition is skewed to acidic residues. 2 stretches are compositionally biased toward polar residues: residues 129-143 (DKSSGPWNKTAQAQA) and 183-194 (SDTQFPSPQATA). Residues 195–213 (KHTESRREKEMEKTFEIVK) show a composition bias toward basic and acidic residues.

This sequence belongs to the CDV3 family.

The protein localises to the cytoplasm. In Xenopus laevis (African clawed frog), this protein is Protein CDV3 homolog B (cdv3-b).